The primary structure comprises 419 residues: Enolase (419 aa).

(2R)-2-phosphoglycerate is bound at residue Q161. The Proton donor role is filled by E205. Residues D240, E283, and D309 each contribute to the Mg(2+) site. (2R)-2-phosphoglycerate contacts are provided by K334, R363, S364, and K385. The Proton acceptor role is filled by K334.

Belongs to the enolase family. Requires Mg(2+) as cofactor.

It localises to the cytoplasm. The protein localises to the secreted. Its subcellular location is the cell surface. It carries out the reaction (2R)-2-phosphoglycerate = phosphoenolpyruvate + H2O. It functions in the pathway carbohydrate degradation; glycolysis; pyruvate from D-glyceraldehyde 3-phosphate: step 4/5. Functionally, catalyzes the reversible conversion of 2-phosphoglycerate (2-PG) into phosphoenolpyruvate (PEP). It is essential for the degradation of carbohydrates via glycolysis. The chain is Enolase from Saccharolobus islandicus (strain Y.N.15.51 / Yellowstone #2) (Sulfolobus islandicus).